A 410-amino-acid polypeptide reads, in one-letter code: Transposase for insertion sequence element IS801 (410 aa).

This sequence belongs to the transposase 32 family.

Its function is as follows. Involved in the transposition of the insertion sequence. The chain is Transposase for insertion sequence element IS801 from Pseudomonas savastanoi pv. phaseolicola (Pseudomonas syringae pv. phaseolicola).